The following is an 832-amino-acid chain: Protein P (832 aa).

The segment at 1 to 177 (MPLSCPHFRK…FCGSPYSWEQ (177 aa)) is terminal protein domain (TP). The interval 178 to 335 (ELQHGAEPVC…YCLSHLVNLL (158 aa)) is spacer. The span at 208 to 224 (KQSRLGLQSQQRQLARS) shows a compositional bias: low complexity. Residues 208-241 (KQSRLGLQSQQRQLARSHQGRSGSIRARVHSTTR) are disordered. The interval 336–679 (EDWGPCTEHG…YLTLYPVARQ (344 aa)) is polymerase/reverse transcriptase domain (RT). The region spanning 346-589 (EHHIRIPRTP…YSLNFMGYII (244 aa)) is the Reverse transcriptase domain. Mg(2+)-binding residues include Asp418, Asp540, and Asp541.

The protein belongs to the hepadnaviridae P protein family.

It carries out the reaction DNA(n) + a 2'-deoxyribonucleoside 5'-triphosphate = DNA(n+1) + diphosphate. The catalysed reaction is Endonucleolytic cleavage to 5'-phosphomonoester.. Its activity is regulated as follows. Activated by host HSP70 and HSP40 in vitro to be able to bind the epsilon loop of the pgRNA. Because deletion of the RNase H region renders the protein partly chaperone-independent, the chaperones may be needed indirectly to relieve occlusion of the RNA-binding site by this domain. Inhibited by several reverse-transcriptase inhibitors: Lamivudine, Adefovir and Entecavir. Multifunctional enzyme that converts the viral RNA genome into dsDNA in viral cytoplasmic capsids. This enzyme displays a DNA polymerase activity that can copy either DNA or RNA templates, and a ribonuclease H (RNase H) activity that cleaves the RNA strand of RNA-DNA heteroduplexes in a partially processive 3'- to 5'-endonucleasic mode. Neo-synthesized pregenomic RNA (pgRNA) are encapsidated together with the P protein, and reverse-transcribed inside the nucleocapsid. Initiation of reverse-transcription occurs first by binding the epsilon loop on the pgRNA genome, and is initiated by protein priming, thereby the 5'-end of (-)DNA is covalently linked to P protein. Partial (+)DNA is synthesized from the (-)DNA template and generates the relaxed circular DNA (RC-DNA) genome. After budding and infection, the RC-DNA migrates in the nucleus, and is converted into a plasmid-like covalently closed circular DNA (cccDNA). The activity of P protein does not seem to be necessary for cccDNA generation, and is presumably released from (+)DNA by host nuclear DNA repair machinery. This is Protein P from Gibbon hepatitis B virus subtype ayw3q (isolate Hope) (HBVgbn).